Consider the following 430-residue polypeptide: Asparagine--tRNA ligase (430 aa).

This sequence belongs to the class-II aminoacyl-tRNA synthetase family. Homodimer.

Its subcellular location is the cytoplasm. It catalyses the reaction tRNA(Asn) + L-asparagine + ATP = L-asparaginyl-tRNA(Asn) + AMP + diphosphate + H(+). The sequence is that of Asparagine--tRNA ligase from Staphylococcus aureus (strain MW2).